The following is a 202-amino-acid chain: Imidazoleglycerol-phosphate dehydratase (202 aa).

Belongs to the imidazoleglycerol-phosphate dehydratase family.

It is found in the cytoplasm. The enzyme catalyses D-erythro-1-(imidazol-4-yl)glycerol 3-phosphate = 3-(imidazol-4-yl)-2-oxopropyl phosphate + H2O. It participates in amino-acid biosynthesis; L-histidine biosynthesis; L-histidine from 5-phospho-alpha-D-ribose 1-diphosphate: step 6/9. The polypeptide is Imidazoleglycerol-phosphate dehydratase (Lactococcus lactis subsp. cremoris (strain SK11)).